A 204-amino-acid polypeptide reads, in one-letter code: Tumor protein D53 (204 aa).

Residues 1-20 (MEAQAQGLLETEPLQGTDED) form a disordered region. A coiled-coil region spans residues 22-73 (VASADFSSMLSEEEKEELKAELVQLEDEITTLRQVLSAKERHLVEIKQKLGM). A phosphoserine mark is found at serine 29, serine 86, serine 122, and serine 131. Arginine 133 carries the omega-N-methylarginine modification. A Phosphothreonine modification is found at threonine 146. Phosphoserine is present on residues serine 149 and serine 174.

It belongs to the TPD52 family. As to quaternary structure, forms a homodimer or heterodimer with other members of the family.

The polypeptide is Tumor protein D53 (TPD52L1) (Homo sapiens (Human)).